Here is a 171-residue protein sequence, read N- to C-terminus: MSPRVLGALVAALTLAADQANKLWLIFVYGIEQRQPIALAPFLDVVYAKNPGISYSLLSARTDFQRYALLGLTLAATIFMILWLWRSTSKLIACALGLIIGGALGNAYDRAAYGFVADFYHFHVGSFSWYVFNLADAAIVAGVALLLYDSLFSARGAGTGGKSRGEGASAL.

Helical transmembrane passes span 67–87 (YALL…LWRS) and 88–108 (TSKL…GNAY). Catalysis depends on residues Asp118 and Asp136. A helical transmembrane segment spans residues 127-147 (FSWYVFNLADAAIVAGVALLL).

Belongs to the peptidase A8 family.

It localises to the cell inner membrane. The catalysed reaction is Release of signal peptides from bacterial membrane prolipoproteins. Hydrolyzes -Xaa-Yaa-Zaa-|-(S,diacylglyceryl)Cys-, in which Xaa is hydrophobic (preferably Leu), and Yaa (Ala or Ser) and Zaa (Gly or Ala) have small, neutral side chains.. It functions in the pathway protein modification; lipoprotein biosynthesis (signal peptide cleavage). Its function is as follows. This protein specifically catalyzes the removal of signal peptides from prolipoproteins. In Methylocella silvestris (strain DSM 15510 / CIP 108128 / LMG 27833 / NCIMB 13906 / BL2), this protein is Lipoprotein signal peptidase.